Consider the following 343-residue polypeptide: Flagellar motor switch protein FliG (343 aa).

Positions 137-140 match the Part of the EHPQR-motif motif; it reads EHPQ. Residues 245–248 carry the M-F-X-F motif; its intrinsic flexibility is probably coupled to flagellar rotation motif; it reads MFTF.

It belongs to the FliG family.

The protein localises to the cell inner membrane. It is found in the bacterial flagellum basal body. Functionally, one of the proteins that forms a switch complex that is proposed to be located at the base of the basal body. This complex interacts with chemotaxis proteins (such as CheY) in addition to contacting components of the motor that determine the direction of flagellar rotation. Required for flagellum synthesis and motility. In H.pylori four flagellar switch proteins are encoded, FliG, FliM, FliN and FliY. This is Flagellar motor switch protein FliG from Helicobacter pylori (strain ATCC 700392 / 26695) (Campylobacter pylori).